The chain runs to 343 residues: Phenylalanine--tRNA ligase alpha subunit (343 aa).

Glutamate 258 contacts Mg(2+).

It belongs to the class-II aminoacyl-tRNA synthetase family. Phe-tRNA synthetase alpha subunit type 1 subfamily. Tetramer of two alpha and two beta subunits. Requires Mg(2+) as cofactor.

Its subcellular location is the cytoplasm. It catalyses the reaction tRNA(Phe) + L-phenylalanine + ATP = L-phenylalanyl-tRNA(Phe) + AMP + diphosphate + H(+). This is Phenylalanine--tRNA ligase alpha subunit from Symbiobacterium thermophilum (strain DSM 24528 / JCM 14929 / IAM 14863 / T).